A 629-amino-acid polypeptide reads, in one-letter code: tRNA uridine 5-carboxymethylaminomethyl modification enzyme MnmG (629 aa).

Residues 13–18 (GGGHAG), Val-125, and Ser-180 contribute to the FAD site. 273 to 287 (GPRYCPSIEDKVMRF) is an NAD(+) binding site. Gln-370 serves as a coordination point for FAD.

It belongs to the MnmG family. As to quaternary structure, homodimer. Heterotetramer of two MnmE and two MnmG subunits. The cofactor is FAD.

The protein localises to the cytoplasm. Its function is as follows. NAD-binding protein involved in the addition of a carboxymethylaminomethyl (cmnm) group at the wobble position (U34) of certain tRNAs, forming tRNA-cmnm(5)s(2)U34. In Shigella flexneri serotype 5b (strain 8401), this protein is tRNA uridine 5-carboxymethylaminomethyl modification enzyme MnmG.